An 889-amino-acid polypeptide reads, in one-letter code: Cytoplasmic aconitate hydratase (889 aa).

Residues Q86 and 205–207 contribute to the substrate site; that span reads DSH. C437, C503, and C506 together coordinate [4Fe-4S] cluster. Substrate is bound by residues R536, R541, R699, and 779–780; that span reads SR.

This sequence belongs to the aconitase/IPM isomerase family. Interacts (when associated with the 4Fe-4S) with FBXL5. Interacts with frataxin(81-210). [4Fe-4S] cluster is required as a cofactor.

Its subcellular location is the cytoplasm. It is found in the cytosol. The enzyme catalyses citrate = D-threo-isocitrate. In terms of biological role, bifunctional iron sensor that switches between 2 activities depending on iron availability. Iron deprivation, promotes its mRNA binding activity through which it regulates the expression of genes involved in iron uptake, sequestration and utilization. Binds to iron-responsive elements (IRES) in the untranslated region of target mRNAs preventing for instance the translation of ferritin and aminolevulinic acid synthase and stabilizing the transferrin receptor mRNA. Its function is as follows. Conversely, when cellular iron levels are high, binds a 4Fe-4S cluster which precludes RNA binding activity and promotes the aconitase activity, the isomerization of citrate to isocitrate via cis-aconitate. The protein is Cytoplasmic aconitate hydratase (Aco1) of Mus musculus (Mouse).